A 622-amino-acid polypeptide reads, in one-letter code: Basal cell adhesion molecule (622 aa).

A signal peptide spans 1-25 (MEPPDARAGLLWLTFLLSGYSGAQA). Ig-like V-type domains follow at residues 26–135 (ELHV…SSVR) and 140–250 (PEDT…HTFR). The Extracellular segment spans residues 26–541 (ELHVSVPPRV…GSVAPQTAQA (516 aa)). 3 disulfides stabilise this stretch: Cys-47–Cys-118, Cys-165–Cys-230, and Cys-284–Cys-330. Ig-like C2-type domains are found at residues 267-342 (PSTT…EEVQ), 356-435 (PLEL…QSFQ), and 442-532 (PELK…FHFG). 4 N-linked (GlcNAc...) asparagine glycosylation sites follow: Asn-314, Asn-323, Asn-370, and Asn-377. Disulfide bonds link Cys-378/Cys-418 and Cys-467/Cys-516. Residues 542-562 (GVAVMAVAVSVGLLLLVVAAF) form a helical membrane-spanning segment. The Cytoplasmic portion of the chain corresponds to 563–622 (YCMRRKGRPGCCRRAEKGAPPAREPELSHSGSERPEHTGLLMGGPSGGGRGGSGGFGDEC). The segment at 574–622 (CRRAEKGAPPAREPELSHSGSERPEHTGLLMGGPSGGGRGGSGGFGDEC) is disordered. Over residues 575–599 (RRAEKGAPPAREPELSHSGSERPEH) the composition is skewed to basic and acidic residues. Phosphoserine occurs at positions 590, 592, 594, and 615. Positions 603–622 (LMGGPSGGGRGGSGGFGDEC) are enriched in gly residues.

As to quaternary structure, homodimer. Interacts with ITGA4:ITGB1. Interacts with spectrins SPTA1 and SPTB1. In terms of processing, epinephrine-stimulated phosphorylation of Ser-615 by PKA enhances adhesion to laminin. Ser-615 can also be phosphorylated by AKT1.

It localises to the cell membrane. Functionally, transmembrane glycoprotein that functions as both a receptor and an adhesion molecule playing a crucial role in cell adhesion, motility, migration and invasion. Extracellular domain enables binding to extracellular matrix proteins, such as laminin, integrin and other ligands while its intracellular domain interacts with cytoskeletal proteins like hemoglobin, facilitating cell signal transduction. Serves as a receptor for laminin alpha-5/LAMA5 to promote cell adhesion. Mechanistically, JAK2 induces BCAM phosphorylation and activates its adhesion to laminin by stimulating a Rap1/AKT signaling pathway in the absence of EPOR. The polypeptide is Basal cell adhesion molecule (Bcam) (Mus musculus (Mouse)).